The following is a 417-amino-acid chain: NADH-quinone oxidoreductase subunit D (417 aa).

The protein belongs to the complex I 49 kDa subunit family. In terms of assembly, NDH-1 is composed of 14 different subunits. Subunits NuoB, C, D, E, F, and G constitute the peripheral sector of the complex.

It localises to the cell inner membrane. It carries out the reaction a quinone + NADH + 5 H(+)(in) = a quinol + NAD(+) + 4 H(+)(out). In terms of biological role, NDH-1 shuttles electrons from NADH, via FMN and iron-sulfur (Fe-S) centers, to quinones in the respiratory chain. The immediate electron acceptor for the enzyme in this species is believed to be ubiquinone. Couples the redox reaction to proton translocation (for every two electrons transferred, four hydrogen ions are translocated across the cytoplasmic membrane), and thus conserves the redox energy in a proton gradient. This Azoarcus sp. (strain BH72) protein is NADH-quinone oxidoreductase subunit D.